A 241-amino-acid polypeptide reads, in one-letter code: Bidirectional sugar transporter SWEET17 (241 aa).

The Vacuolar segment spans residues 1–3 (MAE). Residues 4–24 (ASFYIGVIGNVISVLVFLSPV) form a helical membrane-spanning segment. Residues 6–92 (FYIGVIGNVI…SLFLFYAPRH (87 aa)) form the MtN3/slv 1 domain. Over 25–41 (ETFWKIVKRRSTEEYKS) the chain is Cytoplasmic. The chain crosses the membrane as a helical span at residues 42 to 62 (LPYICTLLGSSLWTYYGIVTP). Residues 63–69 (GEYLVST) lie on the Vacuolar side of the membrane. The chain crosses the membrane as a helical span at residues 70–90 (VNGFGALVETIYVSLFLFYAP). The Cytoplasmic portion of the chain corresponds to 91 to 94 (RHLK). A helical transmembrane segment spans residues 95 to 115 (LKTVDVDAMLNVFFPIAAIVA). Topologically, residues 116–128 (TRSAFEDEKMRSQ) are vacuolar. The chain crosses the membrane as a helical span at residues 129-149 (SIGFISAGLNIIMYGSPLSAM). The region spanning 129–212 (SIGFISAGLN…LILYGIYRNA (84 aa)) is the MtN3/slv 2 domain. The Cytoplasmic portion of the chain corresponds to 150–161 (KTVVTTKSVKYM). A helical membrane pass occupies residues 162 to 182 (PFWLSFFLFLNGAIWAVYALL). At 183-185 (QHD) the chain is on the vacuolar side. The helical transmembrane segment at 186-206 (VFLLVPNGVGFVFGTMQLILY) threads the bilayer. At 207-241 (GIYRNAKPVGLSNGLSEIAQDEEEGLTSRVEPLLS) the chain is on the cytoplasmic side.

This sequence belongs to the SWEET sugar transporter family. In terms of assembly, forms homooligomers and heterooligomers with SWEET1, SWEET2, SWEET3, SWEET4, SWEET6, SWEET7, SWEET8, SWEET9, SWEET11, SWEET12, SWEET13, SWEET15 and SWEET16. Expressed in leaves at low levels, mostly in xylem and parenchyma. Highly expressed in the cortex of roots, predominantly in tips and mature regions, especially in tonoplasts. Also accumulates in cotyledons, stems, flowers, and siliques.

Its subcellular location is the vacuole membrane. Acts as a vacuolar hexose transporter. Regulates fructose (Fru) homeostasis in leaves and roots by exporting/importing Fru through the tonoplast regarding metabolic demand. This Arabidopsis thaliana (Mouse-ear cress) protein is Bidirectional sugar transporter SWEET17.